The sequence spans 346 residues: Uroporphyrinogen decarboxylase (346 aa).

Residues 23–27, Asp-72, Tyr-155, Ser-209, and His-322 contribute to the substrate site; that span reads RQAGR.

The protein belongs to the uroporphyrinogen decarboxylase family. Homodimer.

It is found in the cytoplasm. It catalyses the reaction uroporphyrinogen III + 4 H(+) = coproporphyrinogen III + 4 CO2. It participates in porphyrin-containing compound metabolism; protoporphyrin-IX biosynthesis; coproporphyrinogen-III from 5-aminolevulinate: step 4/4. Functionally, catalyzes the decarboxylation of four acetate groups of uroporphyrinogen-III to yield coproporphyrinogen-III. The sequence is that of Uroporphyrinogen decarboxylase from Anaeromyxobacter dehalogenans (strain 2CP-C).